The primary structure comprises 332 residues: DNA-directed RNA polymerase 2A (332 aa).

Active-site residues include Asp-33, Lys-108, and Asp-265.

The protein belongs to the phage and mitochondrial RNA polymerase family.

It catalyses the reaction RNA(n) + a ribonucleoside 5'-triphosphate = RNA(n+1) + diphosphate. In terms of biological role, DNA-dependent RNA polymerase catalyzes the transcription of DNA into RNA using the four ribonucleoside triphosphates as substrates. The polypeptide is DNA-directed RNA polymerase 2A (RPOT2-SYL) (Nicotiana tabacum (Common tobacco)).